Reading from the N-terminus, the 555-residue chain is Formate--tetrahydrofolate ligase (555 aa).

65-72 (TPAGEGKS) lines the ATP pocket.

It belongs to the formate--tetrahydrofolate ligase family.

It carries out the reaction (6S)-5,6,7,8-tetrahydrofolate + formate + ATP = (6R)-10-formyltetrahydrofolate + ADP + phosphate. It functions in the pathway one-carbon metabolism; tetrahydrofolate interconversion. In Staphylococcus aureus (strain bovine RF122 / ET3-1), this protein is Formate--tetrahydrofolate ligase.